A 348-amino-acid polypeptide reads, in one-letter code: MAKTYYDHDADLALIQQKKVAIIGYGSQGHAHALGLKDSGVEVRVGLAPNSRSIEKAKKAGLETGTVAEVAAWADVIMILAPDTAQAAIYEESIAPHLKAGKTLMFAHGFNIRYDAIQPPKDVDVSLVAPKAPGHRVREVFVEGGGTPGLVAVHQDASGQALALALAYAKAIGCTRAGVLETTFKEETETDLFGEQAVLCGGTAALVKAGFETLVNAGYQPEVAYFECLHELKLIVDLMYRGGLAYMRYSISDTAEWGDYVAGPRIVTDETRAAMKKLLTDIQDGTFAKRWIEENKTGRKELDAIRAQEAKHPIETVGEKLRAAMPFLDPVTVKDGYPQPAGAKPKEA.

Residues 2 to 182 form the KARI N-terminal Rossmann domain; that stretch reads AKTYYDHDAD…GCTRAGVLET (181 aa). Residues 25 to 28, S51, S53, and 83 to 86 contribute to the NADP(+) site; these read YGSQ and DTAQ. H108 is a catalytic residue. G134 provides a ligand contact to NADP(+). Residues 183 to 328 enclose the KARI C-terminal knotted domain; sequence TFKEETETDL…EKLRAAMPFL (146 aa). Mg(2+) contacts are provided by D191, E195, E227, and E231. A substrate-binding site is contributed by S252.

It belongs to the ketol-acid reductoisomerase family. The cofactor is Mg(2+).

The catalysed reaction is (2R)-2,3-dihydroxy-3-methylbutanoate + NADP(+) = (2S)-2-acetolactate + NADPH + H(+). It catalyses the reaction (2R,3R)-2,3-dihydroxy-3-methylpentanoate + NADP(+) = (S)-2-ethyl-2-hydroxy-3-oxobutanoate + NADPH + H(+). Its pathway is amino-acid biosynthesis; L-isoleucine biosynthesis; L-isoleucine from 2-oxobutanoate: step 2/4. It participates in amino-acid biosynthesis; L-valine biosynthesis; L-valine from pyruvate: step 2/4. Its function is as follows. Involved in the biosynthesis of branched-chain amino acids (BCAA). Catalyzes an alkyl-migration followed by a ketol-acid reduction of (S)-2-acetolactate (S2AL) to yield (R)-2,3-dihydroxy-isovalerate. In the isomerase reaction, S2AL is rearranged via a Mg-dependent methyl migration to produce 3-hydroxy-3-methyl-2-ketobutyrate (HMKB). In the reductase reaction, this 2-ketoacid undergoes a metal-dependent reduction by NADPH to yield (R)-2,3-dihydroxy-isovalerate. The chain is Ketol-acid reductoisomerase (NADP(+)) from Acidobacterium capsulatum (strain ATCC 51196 / DSM 11244 / BCRC 80197 / JCM 7670 / NBRC 15755 / NCIMB 13165 / 161).